The chain runs to 337 residues: 3-isopropylmalate dehydrogenase (337 aa).

Residues R86, R96, R117, and D201 each contribute to the substrate site. 3 residues coordinate Mg(2+): D201, D225, and D229. 258–270 (GAAFDIAGKNIGN) contributes to the NAD(+) binding site.

The protein belongs to the isocitrate and isopropylmalate dehydrogenases family. As to quaternary structure, homotetramer. Requires Mg(2+) as cofactor. The cofactor is Mn(2+).

The protein resides in the cytoplasm. It catalyses the reaction (2R,3S)-3-isopropylmalate + NAD(+) = 4-methyl-2-oxopentanoate + CO2 + NADH. Its pathway is amino-acid biosynthesis; L-leucine biosynthesis; L-leucine from 3-methyl-2-oxobutanoate: step 3/4. Catalyzes the oxidation of 3-carboxy-2-hydroxy-4-methylpentanoate (3-isopropylmalate) to 3-carboxy-4-methyl-2-oxopentanoate. The product decarboxylates to 4-methyl-2 oxopentanoate. The polypeptide is 3-isopropylmalate dehydrogenase (leuB) (Sulfurisphaera tokodaii (strain DSM 16993 / JCM 10545 / NBRC 100140 / 7) (Sulfolobus tokodaii)).